A 547-amino-acid polypeptide reads, in one-letter code: Glucose-6-phosphate isomerase (547 aa).

Glu-352 acts as the Proton donor in catalysis. Residues His-383 and Lys-511 contribute to the active site.

This sequence belongs to the GPI family.

Its subcellular location is the cytoplasm. It carries out the reaction alpha-D-glucose 6-phosphate = beta-D-fructose 6-phosphate. Its pathway is carbohydrate biosynthesis; gluconeogenesis. It functions in the pathway carbohydrate degradation; glycolysis; D-glyceraldehyde 3-phosphate and glycerone phosphate from D-glucose: step 2/4. In terms of biological role, catalyzes the reversible isomerization of glucose-6-phosphate to fructose-6-phosphate. The protein is Glucose-6-phosphate isomerase of Magnetococcus marinus (strain ATCC BAA-1437 / JCM 17883 / MC-1).